A 143-amino-acid polypeptide reads, in one-letter code: Acyl carrier protein 3, chloroplastic (143 aa).

The N-terminal 60 residues, 1–60, are a transit peptide targeting the chloroplast; sequence MATAAAGSSLICIKSASCSLNRAQVPSGLSSLRSVSLPISGKIFPSLRSSRGPLSFRVCC. In terms of domain architecture, Carrier spans 64–139; sequence QETVTRVCEI…DAADLIEKLV (76 aa). Serine 99 carries the post-translational modification O-(pantetheine 4'-phosphoryl)serine.

This sequence belongs to the acyl carrier protein (ACP) family. 4'-phosphopantetheine is transferred from CoA to a specific serine of apo-ACP by acpS. This modification is essential for activity because fatty acids are bound in thioester linkage to the sulfhydryl of the prosthetic group.

It is found in the plastid. Its subcellular location is the chloroplast. Its pathway is lipid metabolism; fatty acid biosynthesis. In terms of biological role, carrier of the growing fatty acid chain in fatty acid biosynthesis. The protein is Acyl carrier protein 3, chloroplastic (ACL1.3) of Cuphea lanceolata (Cigar flower).